The chain runs to 716 residues: Hepatocyte growth factor-like protein (716 aa).

The first 18 residues, 1-18 (MGWLPLLLLLVQCSRALG), serve as a signal peptide directing secretion. Positions 19-105 (QRSPLNDFQL…SLCHLFQKKD (87 aa)) constitute a PAN domain. Intrachain disulfides connect cysteine 56–cysteine 78, cysteine 60–cysteine 66, cysteine 110–cysteine 186, cysteine 131–cysteine 169, cysteine 157–cysteine 181, cysteine 191–cysteine 268, cysteine 194–cysteine 333, cysteine 212–cysteine 251, cysteine 240–cysteine 263, cysteine 292–cysteine 370, cysteine 313–cysteine 352, cysteine 341–cysteine 364, cysteine 379–cysteine 457, cysteine 400–cysteine 440, cysteine 428–cysteine 452, cysteine 477–cysteine 593, cysteine 512–cysteine 528, cysteine 607–cysteine 672, cysteine 637–cysteine 651, and cysteine 662–cysteine 690. The N-linked (GlcNAc...) asparagine glycan is linked to asparagine 72. 4 consecutive Kringle domains span residues 110-186 (CIMD…IKTC), 191-268 (CVLC…LPSC), 292-370 (CFRG…IPRC), and 379-457 (CYHG…LQRC). Asparagine 173 carries an N-linked (GlcNAc...) asparagine glycan. An N-linked (GlcNAc...) asparagine glycan is attached at asparagine 305. The Peptidase S1 domain maps to 489-714 (VVGGHPGNSP…FVDWINKVMQ (226 aa)). Asparagine 620 is a glycosylation site (N-linked (GlcNAc...) asparagine).

This sequence belongs to the peptidase S1 family. Plasminogen subfamily. In terms of assembly, dimer of an alpha chain and a beta chain linked by a disulfide bond. Interacts (via beta chain) with MST1R (via SEMA domain). In terms of processing, cleaved after Arg-488, probably by HPN/Hepsin, to yield the active form consisting of two disulfide-linked chains. In terms of tissue distribution, liver. Lower levels in lung, placenta and adrenal.

The protein resides in the secreted. This is Hepatocyte growth factor-like protein (Mst1) from Mus musculus (Mouse).